Here is a 453-residue protein sequence, read N- to C-terminus: Pup--protein ligase (453 aa).

Residue Glu9 coordinates Mg(2+). Residue Arg53 participates in ATP binding. Residue Tyr55 coordinates Mg(2+). Asp57 acts as the Proton acceptor in catalysis. Residue Glu63 coordinates Mg(2+). The ATP site is built by Thr66 and Trp420.

It belongs to the Pup ligase/Pup deamidase family. Pup-conjugating enzyme subfamily.

The catalysed reaction is ATP + [prokaryotic ubiquitin-like protein]-L-glutamate + [protein]-L-lysine = ADP + phosphate + N(6)-([prokaryotic ubiquitin-like protein]-gamma-L-glutamyl)-[protein]-L-lysine.. Its pathway is protein degradation; proteasomal Pup-dependent pathway. The protein operates within protein modification; protein pupylation. In terms of biological role, catalyzes the covalent attachment of the prokaryotic ubiquitin-like protein modifier Pup to the proteasomal substrate proteins, thereby targeting them for proteasomal degradation. This tagging system is termed pupylation. The ligation reaction involves the side-chain carboxylate of the C-terminal glutamate of Pup and the side-chain amino group of a substrate lysine. The sequence is that of Pup--protein ligase from Streptomyces scabiei (strain 87.22).